The primary structure comprises 603 residues: MDTKDFKRLEKMYSPRYLPGLDGLRAFAVIGIIIYHLNAQWLSGGFLGVDTFFVISGYLITSLLISEYYRTQKIDLLEFWKRRLKRLIPAVLFLICVVLTFTLIFKPELIIQMKRDAIAAIFYVSNWWYISQNVDYFNQFAIEPLKHLWSLAIEEQFYLLFPLVITFLLHRFKPRNIIQTLFIVSLISLGLMIVIHFITGDNSRVYFGTDTRLQTLLLGCILAFIWPPFALKKDISKKIVVSLDIIGISGFAVLMTLFFIVGDQDQWIYNGGFYIISFATLFIIAIAVHPSSLFAKFLSMKPLLIIGKRSYSLYLWHYPIIVFVNSYYVQGQIPVYVYIIEILLTALMAEISYRFIETPIRKKGFKAFAFLPKKKGQFARTVLVILLLVPSIVVLSGQFDALGKQHEAEKKEKKTEFKTTKKKVVKKDKQEDKQTANSKEDIKKSSPLLIGDSVMVDIGNVFTKKIPNAQIDGKVGRQLVDATPIVKSQYKDYAKKGQKVVVELGTNGAFTKDQLNELLDSFGKADIYLVSIRVPRDYEGRINKLIYEAAEKRSNVHLVDWYKASAGHPEYFAYDGIHLEYAGSKALTDLIVKTMETHATNKK.

Helical transmembrane passes span 17-37, 45-65, 87-107, 148-168, 177-197, 211-231, 239-259, 268-288, 311-331, 333-353, and 382-402; these read YLPGLDGLRAFAVIGIIIYHL, GFLGVDTFFVISGYLITSLLI, LIPAVLFLICVVLTFTLIFKP, LWSLAIEEQFYLLFPLVITFL, IIQTLFIVSLISLGLMIVIHF, TRLQTLLLGCILAFIWPPFAL, IVVSLDIIGISGFAVLMTLFF, IYNGGFYIISFATLFIIAIAV, YSLYLWHYPIIVFVNSYYVQG, IPVYVYIIEILLTALMAEISY, and VLVILLLVPSIVVLSGQFDAL. Active-site residues include S453, D575, and H578.

Belongs to the acyltransferase 3 family. In terms of assembly, monomer.

It localises to the cell membrane. Its function is as follows. Responsible for O-acetylation at the C(6)-hydroxyl group of N-acetylmuramyl residues, forming the corresponding N,6-O-diacetylmuramic acid of the peptidoglycan. O-acetylation of the peptidoglycan is the major determinant for lysozyme resistance. The protein is O-acetyltransferase OatA of Staphylococcus aureus (strain NCTC 8325 / PS 47).